The following is a 558-amino-acid chain: Potassium-transporting ATPase potassium-binding subunit (558 aa).

Helical transmembrane passes span 1–21 (MEII…SGYL), 66–86 (FNGF…WLFL), 127–147 (MIVM…VCIA), 166–186 (IVRF…ILLM), 245–265 (IWSN…MLFL), 281–301 (ALIL…LTMW), 327–347 (FGAG…TGSV), 354–374 (LTPI…VFGG), 377–397 (VGLM…SLMV), 416–436 (IVLV…LAFM), 482–502 (ISTG…QLMI), and 531–551 (IVFI…LGPI).

It belongs to the KdpA family. In terms of assembly, the system is composed of three essential subunits: KdpA, KdpB and KdpC.

It localises to the cell membrane. In terms of biological role, part of the high-affinity ATP-driven potassium transport (or Kdp) system, which catalyzes the hydrolysis of ATP coupled with the electrogenic transport of potassium into the cytoplasm. This subunit binds the extracellular potassium ions and delivers the ions to the membrane domain of KdpB through an intramembrane tunnel. This is Potassium-transporting ATPase potassium-binding subunit from Staphylococcus aureus (strain USA300).